Reading from the N-terminus, the 475-residue chain is Ribulose bisphosphate carboxylase large chain (475 aa).

Positions 1-2 (MS) are excised as a propeptide. An N-acetylproline modification is found at Pro-3. Lys-14 carries the post-translational modification N6,N6,N6-trimethyllysine. The substrate site is built by Asn-123 and Thr-173. The Proton acceptor role is filled by Lys-175. Lys-177 serves as a coordination point for substrate. Positions 201, 203, and 204 each coordinate Mg(2+). N6-carboxylysine is present on Lys-201. The Proton acceptor role is filled by His-294. Substrate-binding residues include Arg-295, His-327, and Ser-379.

Belongs to the RuBisCO large chain family. Type I subfamily. As to quaternary structure, heterohexadecamer of 8 large chains and 8 small chains; disulfide-linked. The disulfide link is formed within the large subunit homodimers. Mg(2+) is required as a cofactor. In terms of processing, the disulfide bond which can form in the large chain dimeric partners within the hexadecamer appears to be associated with oxidative stress and protein turnover.

It localises to the plastid. The protein localises to the chloroplast. The enzyme catalyses 2 (2R)-3-phosphoglycerate + 2 H(+) = D-ribulose 1,5-bisphosphate + CO2 + H2O. It catalyses the reaction D-ribulose 1,5-bisphosphate + O2 = 2-phosphoglycolate + (2R)-3-phosphoglycerate + 2 H(+). In terms of biological role, ruBisCO catalyzes two reactions: the carboxylation of D-ribulose 1,5-bisphosphate, the primary event in carbon dioxide fixation, as well as the oxidative fragmentation of the pentose substrate in the photorespiration process. Both reactions occur simultaneously and in competition at the same active site. The sequence is that of Ribulose bisphosphate carboxylase large chain from Tsuga heterophylla (Western hemlock).